The following is a 364-amino-acid chain: DNA replication and repair protein RecF (364 aa).

30–37 provides a ligand contact to ATP; that stretch reads GDNAQGKT.

The protein belongs to the RecF family.

The protein resides in the cytoplasm. The RecF protein is involved in DNA metabolism; it is required for DNA replication and normal SOS inducibility. RecF binds preferentially to single-stranded, linear DNA. It also seems to bind ATP. The sequence is that of DNA replication and repair protein RecF from Clostridium kluyveri (strain ATCC 8527 / DSM 555 / NBRC 12016 / NCIMB 10680 / K1).